Reading from the N-terminus, the 1691-residue chain is Non-structural polyprotein pORF1 (1691 aa).

Residues 56–240 enclose the Alphavirus-like MT domain; the sequence is VFRPEVFWNH…HDVATLRTWI (185 aa). Residues 60 to 240 form a methyltransferase region; the sequence is EVFWNHPIQR…HDVATLRTWI (181 aa). The Y-domain stretch occupies residues 241 to 439; sequence RTTKVVGEHP…FYAQCRRWLS (199 aa). Cysteine 434 and cysteine 481 form a disulfide bridge. A putative protease region spans residues 442-509; that stretch reads FHLDPRTLVF…EAYEGSDVDT (68 aa). The interval 510 to 691 is zinc-binding; it reads AEPATLDITG…FSPGHEWRSA (182 aa). Positions 671, 673, and 686 each coordinate Zn(2+). Positions 710-776 are hinge; the sequence is DTPLTVGLIS…GPNPNGVPQR (67 aa). A disordered region spans residues 722–778; it reads LDAAPHSGGPPATATGPAVGSSDSPDPDPLPDVTDGSRPSGARPAGPNPNGVPQRRL. The region spanning 773-919 is the Macro domain; that stretch reads VPQRRLLHTY…LYLTELAARW (147 aa). Positions 783 to 940 are X-domain; that stretch reads PDGAKIYVGS…NITEDTARAA (158 aa). One can recognise a (+)RNA virus helicase ATP-binding domain in the interval 932–1080; sequence ITEDTARAAN…RPELVPTSWW (149 aa). The interval 958–1202 is NTPase/helicase; the sequence is GCKVEPGVVR…ISDAIVNNFF (245 aa). Position 973–980 (973–980) interacts with ATP; it reads GVPGSGKS. Positions 1081-1214 constitute a (+)RNA virus helicase C-terminal domain; it reads HVTHRCPADV…GGEVGHQRPS (134 aa). The interval 1205–1691 is RNA-directed RNA polymerase; it reads GGEVGHQRPS…LTHSIMHRSE (487 aa). A RdRp catalytic domain is found at 1452 to 1563; it reads AMVFENDFSE…LCSEYRQSPG (112 aa).

This sequence belongs to the hepevirus non-structural polyprotein family. The protease domain interacts with host EIF2AK4 (via C-terminus); this interaction inhibits dimerization of EIF2AK4 and prevents EIF2AK4-mediated phosphorylation of host EIF2A. It depends on Mg(2+) as a cofactor. ORF1 polyprotein does not seem to be processed into distinct enzymatic domains by a viral protease belonging to ORF1, but could be processed by a host serine protease like thrombin.

The protein resides in the host cytoplasm. It localises to the host perinuclear region. The enzyme catalyses RNA(n) + a ribonucleoside 5'-triphosphate = RNA(n+1) + diphosphate. The catalysed reaction is GTP + S-adenosyl-L-methionine = N(7)-methyl-GTP + S-adenosyl-L-homocysteine. Putative protease: Inhibited by chymostatin. Its function is as follows. Methyltransferase: Displays a capping enzyme activity. This function is necessary since all viral RNAs are synthesized in the cytoplasm, and host capping enzymes are restricted to the nucleus. The enzymatic reaction involves a covalent link between 7-methyl-GMP and the methyltransferase, whereas eukaryotic capping enzymes form a covalent complex only with GMP. Methyltransferase catalyzes transfer of a methyl group from S-adenosylmethionine to GTP and GDP to yield m(7)GTP or m(7)GDP. GDP is a better substrate than GTP. This enzyme also displays guanylyltransferase activity to form a covalent complex, methyltransferase-m(7)GMP, from which 7-methyl-GMP is transferred to the mRNA to create the cap structure. In terms of biological role, Y-domain: Indispensable for virus replication. Putative protease: The putative protease domain although necessary for replication of the virus may not be a protease but rather a structural Zn(2+)-binding domain. Inhibits induction of IFN-beta by MDA5 and RIG-I pathways and down-regulates the expression of MDA5. Functionally, NTPase/helicase: Multi-functional protein that exhibits NTPase and RNA unwinding activities. Hydrolyzes all NTPs efficiently and unwinds RNA duplexes containing 5' overhangs. Possesses a sequence independent RNA-5'-triphosphatase (RTPase) activity suggestive of its role in forming viral cap structure. Also participates in viral genome replication, RNA translocation and genome packaging/unpackaging. Its function is as follows. RNA-directed RNA polymerase: Plays an essential role in the virus replication. Binds to the 3'-end of the genomic RNA to initiate viral replication. This chain is Non-structural polyprotein pORF1, found in Bandicota bengalensis (lesser bandicoot rat).